Reading from the N-terminus, the 89-residue chain is Small ribosomal subunit protein uS15 (89 aa).

A compositionally biased stretch (basic and acidic residues) spans 1-11; that stretch reads MSIAAERKAEV. Residues 1 to 25 are disordered; sequence MSIAAERKAEVIKTSANKPGDTGSP.

Belongs to the universal ribosomal protein uS15 family. In terms of assembly, part of the 30S ribosomal subunit. Forms a bridge to the 50S subunit in the 70S ribosome, contacting the 23S rRNA.

In terms of biological role, one of the primary rRNA binding proteins, it binds directly to 16S rRNA where it helps nucleate assembly of the platform of the 30S subunit by binding and bridging several RNA helices of the 16S rRNA. Its function is as follows. Forms an intersubunit bridge (bridge B4) with the 23S rRNA of the 50S subunit in the ribosome. The protein is Small ribosomal subunit protein uS15 of Nitrobacter winogradskyi (strain ATCC 25391 / DSM 10237 / CIP 104748 / NCIMB 11846 / Nb-255).